We begin with the raw amino-acid sequence, 311 residues long: tRNA-cytidine(32) 2-sulfurtransferase (311 aa).

The PP-loop motif signature appears at 47 to 52; the sequence is SGGKDS. [4Fe-4S] cluster is bound by residues cysteine 122, cysteine 125, and cysteine 213.

The protein belongs to the TtcA family. Homodimer. It depends on Mg(2+) as a cofactor. [4Fe-4S] cluster is required as a cofactor.

The protein resides in the cytoplasm. It catalyses the reaction cytidine(32) in tRNA + S-sulfanyl-L-cysteinyl-[cysteine desulfurase] + AH2 + ATP = 2-thiocytidine(32) in tRNA + L-cysteinyl-[cysteine desulfurase] + A + AMP + diphosphate + H(+). It participates in tRNA modification. Catalyzes the ATP-dependent 2-thiolation of cytidine in position 32 of tRNA, to form 2-thiocytidine (s(2)C32). The sulfur atoms are provided by the cysteine/cysteine desulfurase (IscS) system. The polypeptide is tRNA-cytidine(32) 2-sulfurtransferase (Klebsiella pneumoniae subsp. pneumoniae (strain ATCC 700721 / MGH 78578)).